The sequence spans 464 residues: Cysteine--tRNA ligase (464 aa).

Residue cysteine 27 coordinates Zn(2+). A 'HIGH' region motif is present at residues 29-39 (PTVYNYFHIGN). Cysteine 207, histidine 232, and glutamate 236 together coordinate Zn(2+). A 'KMSKS' region motif is present at residues 264–268 (KMSKS). ATP is bound at residue lysine 267.

It belongs to the class-I aminoacyl-tRNA synthetase family. Monomer. Zn(2+) serves as cofactor.

It is found in the cytoplasm. The catalysed reaction is tRNA(Cys) + L-cysteine + ATP = L-cysteinyl-tRNA(Cys) + AMP + diphosphate. The polypeptide is Cysteine--tRNA ligase (Alkaliphilus oremlandii (strain OhILAs) (Clostridium oremlandii (strain OhILAs))).